The following is a 316-amino-acid chain: Phosphoglycerate mutase-like protein AT74 (316 aa).

Residue His17 is the Tele-phosphohistidine intermediate of the active site. The active-site Proton donor/acceptor is Glu106. A disordered region spans residues 275-316 (KECETEATEDREEEEEEEGKRVNLLTSSEYSNEPELYNGQCC). The segment covering 279-291 (TEATEDREEEEEE) has biased composition (acidic residues).

The protein belongs to the phosphoglycerate mutase family. In terms of tissue distribution, expressed in roots, leaves, stems, flowers and siliques.

Functionally, phosphoglycerate mutase-like protein lacking PGM activity. May play a role in carbohydrates metabolism. In Arabidopsis thaliana (Mouse-ear cress), this protein is Phosphoglycerate mutase-like protein AT74.